A 711-amino-acid chain; its full sequence is Pentatricopeptide repeat-containing protein At5g46580, chloroplastic (711 aa).

Residues 1–43 (MATVLTTAIDVCFNPQNSDTKKHSLFLKPSLFRQSRSRKLNIS) constitute a chloroplast transit peptide. 10 PPR repeats span residues 185-219 (ETIF…GVEL), 220-254 (DNIT…GLMP), 255-289 (DEVT…GWKP), 290-324 (DAIA…DVKP), 325-359 (NVVV…GLTP), 360-394 (NEKT…KWPM), 395-425 (DFIL…MKES), 431-465 (DNFS…GVQV), 466-500 (NVMG…GVKP), and 501-535 (DDRL…NKKL). The 83-residue stretch at 614 to 696 (LDVRSLSVGA…IFVATKEDLV (83 aa)) folds into the Smr domain.

Belongs to the PPR family. P subfamily.

It localises to the plastid. It is found in the chloroplast. This Arabidopsis thaliana (Mouse-ear cress) protein is Pentatricopeptide repeat-containing protein At5g46580, chloroplastic.